The primary structure comprises 855 residues: MPWTLQPKWLAGKGLPLLGAILLRKTEKSEPQWKHRRQETHPYYDLQVKVLRARNIQHTDKLSKADCYVRLWLPTASVSPSQTRTVVNSSDPEWNETFPYQIHGAVKNVLELALYDEDVLDSDNVFSILFDTSTLQLGQPCTKNFTRQQDPKELEVEFTLEKSQTPASEVVTNGVLVAHPCLRIQGTVTGDKTASLGELGSRQIQLAVPGAYEKPQPLQPTSEPGLPVNFTFHVNPVLSPKLHIKLQEQLQVFHSGPSDELEAQTSKMDKASILLSSLPLNEELTKLVDLEEGQQVSLRMKADMSSSGDLDLRLGFDLCDGEQEFLDKRKQVASKALQRVMGLSEALHCDQVPVVAVLGSGGGTRAMTSLYGSLAGLQELGLLDAVTYLSGVSGSSWCISTLYRDPSWSQKALQGPIKYASERVCSSKIGMLSPKQFEYYSREKRAWESRGHSMSFTDLWGLIIEYFLNQEENPAKLSDQQETVSQGQNPYPIYASINVHKNISGDDFAEWCEFTPYEVGFPKYGAYVPTELFGSEFFMGRLLHFWPEPRICYLQGMWGSAFAASLYEIFLKLGGLSLSFLDWHRGSVSVTDDWPKLRKQDPTRLPTRLFTPMSSFSQAVLDIFTSRITCAQTFNFTRGLCMYKDYTARKDFVVSEDAWHSHNYGYPDACPNQLTPMKDFLSLVDGGFAINSPFPLVLQPQRAVDLIVSFDYSLEGPFEVLQVTEKYCRDRGIPFPRIEVDPKDSEDPRECYLFAEAEDPCSPIVLHFPLVNRTFRTHLAPGVERQTAEEKAFGDFIINGPDTAYGMMDFTYEPKEFDRLVTLSRYNVLNNKETIRHALQLALDRRRQAGGRVGG.

A C2 domain is found at 27–145 (EKSEPQWKHR…QLGQPCTKNF (119 aa)). Ca(2+) contacts are provided by Asp60, Asp66, Asp116, Asp118, and Asp123. Residues 304–855 (MSSSGDLDLR…RRQAGGRVGG (552 aa)) form the PLA2c domain. Catalysis depends on Ser393, which acts as the Nucleophile. Residue Asp685 is the Proton acceptor of the active site.

Requires Ca(2+) as cofactor. Strongly expressed in thyroid, expressed at intermediate level in stomach and at very low level in large intestine and prostate.

It localises to the cytoplasm. The protein resides in the cytosol. It is found in the cell membrane. The protein localises to the mitochondrion. It catalyses the reaction a 1,2-diacyl-sn-glycero-3-phosphocholine + H2O = a 1-acyl-sn-glycero-3-phosphocholine + a fatty acid + H(+). It carries out the reaction a 1-O-alkyl-2-acyl-sn-glycero-3-phosphocholine + H2O = a 1-O-alkyl-sn-glycero-3-phosphocholine + a fatty acid + H(+). The catalysed reaction is 1-hexadecanoyl-2-(9Z-octadecenoyl)-sn-glycero-3-phosphocholine + H2O = 2-(9Z-octadecenoyl)-sn-glycero-3-phosphocholine + hexadecanoate + H(+). The enzyme catalyses 1-hexadecanoyl-2-(9Z,12Z-octadecadienoyl)-sn-glycero-3-phosphocholine + H2O = (9Z,12Z)-octadecadienoate + 1-hexadecanoyl-sn-glycero-3-phosphocholine + H(+). It catalyses the reaction 1-hexadecanoyl-2-(5Z,8Z,11Z,14Z-eicosatetraenoyl)-sn-glycero-3-phosphocholine + H2O = 1-hexadecanoyl-sn-glycero-3-phosphocholine + (5Z,8Z,11Z,14Z)-eicosatetraenoate + H(+). It carries out the reaction 1-hexadecanoyl-2-(9Z,12Z-octadecadienoyl)-sn-glycero-3-phosphoethanolamine + H2O = 1-hexadecanoyl-sn-glycero-3-phosphoethanolamine + (9Z,12Z)-octadecadienoate + H(+). The catalysed reaction is 1-hexadecanoyl-2-(5Z,8Z,11Z,14Z-eicosatetraenoyl)-sn-glycero-3-phosphoethanolamine + H2O = 1-hexadecanoyl-sn-glycero-3-phosphoethanolamine + (5Z,8Z,11Z,14Z)-eicosatetraenoate + H(+). The enzyme catalyses 1-(5Z,8Z,11Z,14Z-eicosatetraenoyl)-2-O-hexadecyl-sn-glycero-3-phosphocholine + H2O = 2-O-hexadecyl-sn-glycero-3-phosphocholine + (5Z,8Z,11Z,14Z)-eicosatetraenoate + H(+). It catalyses the reaction 1-O-hexadecyl-2-(5Z,8Z,11Z,14Z)-eicosatetraenoyl-sn-glycero-3-phosphocholine + H2O = 1-O-hexadecyl-sn-glycero-3-phosphocholine + (5Z,8Z,11Z,14Z)-eicosatetraenoate + H(+). It carries out the reaction 1-hexadecanoyl-sn-glycero-3-phosphocholine + H2O = sn-glycerol 3-phosphocholine + hexadecanoate + H(+). With respect to regulation, stimulated by cytosolic Ca(2+). Has calcium-dependent phospholipase and lysophospholipase activities with a potential role in membrane lipid remodeling and biosynthesis of lipid mediators. Preferentially hydrolyzes the ester bond of the fatty acyl group attached at sn-2 position of phospholipids (phospholipase A2 activity). Selectively hydrolyzes sn-2 arachidonoyl group from membrane phospholipids, providing the precursor for eicosanoid biosynthesis. In myocardial mitochondria, plays a major role in arachidonate release that is metabolically channeled to the formation of cardioprotective eicosanoids, epoxyeicosatrienoates (EETs). The polypeptide is Cytosolic phospholipase A2 zeta (Pla2g4f) (Mus musculus (Mouse)).